Consider the following 188-residue polypeptide: F-box only protein 36 (188 aa).

One can recognise an F-box domain in the interval 91 to 137 (FDFLERLSDDLLLNIISYLDLEDIARLCQTSHRFAKLCMSDKLWEQI).

As to quaternary structure, directly interacts with SKP1 and CUL1.

Its function is as follows. Substrate-recognition component of the SCF (SKP1-CUL1-F-box protein)-type E3 ubiquitin ligase complex. This chain is F-box only protein 36 (FBXO36), found in Pongo abelii (Sumatran orangutan).